The sequence spans 1423 residues: Autophagy-related protein 11 (1423 aa).

Coiled coils occupy residues 551–589 and 625–978; these read DDELLRSLQDDKSKLESKLKTAESRVRRLEDLLHRQSQA and SEGT…ASEL. Disordered stretches follow at residues 583-660 and 1028-1048; these read LHRQ…SNRA and RAERAAQNPNDSSDPGTSLRK. Polar residues predominate over residues 585-602; the sequence is RQSQASRPGNLFQPQTNS. Residues 631–648 show a composition bias toward basic and acidic residues; it reads LLRRISELENELREEKQR. Polar residues-rich tracts occupy residues 650–660 and 1034–1047; these read SRIQNDLSNRA and QNPNDSSDPGTSLR. A coiled-coil region spans residues 1102–1130; the sequence is HRIKEVEHKARKWQKEARSYRDRAHIAQK. The tract at residues 1327–1423 is disordered; it reads SLRAAAPETP…DYTYESPGKK (97 aa). Over residues 1383–1395 the composition is skewed to basic and acidic residues; the sequence is KTAEPRRMLDRQE.

This sequence belongs to the ATG11 family. In terms of assembly, homodimer and potential homooligomers. Interacts with ATG1 kinase and the ATG19 and ATG34 cargo protein transporters. Interacts with ATG9, ATG17 and ATG20.

It localises to the preautophagosomal structure membrane. Its subcellular location is the vacuole membrane. Involved in cytoplasm to vacuole transport (Cvt), pexophagy, mitophagy and nucleophagy. Recruits mitochondria for their selective degradation via autophagy (mitophagy) during starvation, through its interaction with ATG32. Works as scaffold proteins that recruit ATG proteins to the pre-autophagosome (PAS), the site of vesicle/autophagosome formation. Required for ATG9 anterograde transport from the mitochondria to the PAS. Also recruits the ATG19-prAPE1 complex to the PAS. Required for the Cvt vesicles completion. Plays a role in morphological differentiation and cephalosporin production. In Hapsidospora chrysogena (Acremonium chrysogenum), this protein is Autophagy-related protein 11.